The following is a 472-amino-acid chain: Probable dipeptidase A (472 aa).

Cys10 is an active-site residue.

Belongs to the peptidase C69 family.

The catalysed reaction is an L-aminoacyl-L-amino acid + H2O = 2 an L-alpha-amino acid. The chain is Probable dipeptidase A (pepDA) from Streptococcus pyogenes serotype M1.